We begin with the raw amino-acid sequence, 772 residues long: Magnetosome formation protease MamE (772 aa).

The Cytoplasmic segment spans residues 1–21 (MTMFNGDVEDGGRSNVSCGKD). A helical transmembrane segment spans residues 22 to 42 (LKRYLMLMGVVALVVLFGAFI). Residues 43–772 (YRQSSGGLRL…RNGQEFWIVL (730 aa)) are Lumenal-facing. Catalysis depends on charge relay system residues His-187, Asp-220, and Ser-296. The MCR (magnetochrome) 1 signature appears at 374 to 397 (IAAGTPSPHVDGRQNMDCSNCHDI). Heme-binding residues include Cys-391, Cys-394, His-395, Cys-437, Cys-440, His-441, Cys-488, Cys-491, and His-492. Short sequence motifs (MCR) lie at residues 420 to 443 (IPAN…CHQF) and 470 to 494 (AIRA…CHQI). One can recognise a Cytochrome c domain in the interval 445–558 (GGAAAGPIAF…ALTPLTQRLG (114 aa)). 2 PDZ domains span residues 522–626 (AINI…LRAG) and 696–765 (GATP…HRNG).

In the N-terminal section; belongs to the peptidase S1C family. In terms of assembly, might interact with MamB via PDZ1. Requires heme as cofactor. In terms of processing, the protein isolated from magnetosome membranes has a molecular weight of about 36.3 kDa, probably due to C-terminal cleavage. Subject to autocatalytic cleavage; cleavage also requires MamO; these may be the same event.

It localises to the magnetosome membrane. Functionally, acts at 2 distinct steps of magnetosome formation; required for correct localization of proteins to the magnetosome while the protease activity is required for maturation of small magnetite crystals into larger, functional ones. Probably cleaves at least itself, MamO and MamP; cleavage requires the putative transprot domain of MamO. Involved in localization of some proteins (at least MamA, MamC, MamF, MamI and MamJ) to the magnetosome. One of 7 genes (mamLQBIEMO) able to induce magnetosome membrane biogenesis; coexpression of mamLQRBIEMO in a deletion of the 17 gene mamAB operon restores magnetosome vesicle formation but not magnetite biosynthesis. The protein is Magnetosome formation protease MamE of Magnetospirillum gryphiswaldense (strain DSM 6361 / JCM 21280 / NBRC 15271 / MSR-1).